The primary structure comprises 272 residues: NH(3)-dependent NAD(+) synthetase (272 aa).

45-52 contacts ATP; that stretch reads GISGGQDS. A Mg(2+)-binding site is contributed by Asp-51. A deamido-NAD(+)-binding site is contributed by Arg-138. Residue Thr-158 participates in ATP binding. Glu-163 serves as a coordination point for Mg(2+). 2 residues coordinate deamido-NAD(+): Lys-171 and Asp-178. 2 residues coordinate ATP: Lys-187 and Thr-209. 258 to 259 lines the deamido-NAD(+) pocket; the sequence is HK.

It belongs to the NAD synthetase family. In terms of assembly, homodimer.

The enzyme catalyses deamido-NAD(+) + NH4(+) + ATP = AMP + diphosphate + NAD(+) + H(+). It participates in cofactor biosynthesis; NAD(+) biosynthesis; NAD(+) from deamido-NAD(+) (ammonia route): step 1/1. Its function is as follows. Catalyzes the ATP-dependent amidation of deamido-NAD to form NAD. Uses ammonia as a nitrogen source. The polypeptide is NH(3)-dependent NAD(+) synthetase (Bacillus thuringiensis subsp. konkukian (strain 97-27)).